The primary structure comprises 191 residues: Neuronal calcium sensor 1 (191 aa).

A lipid anchor (N-myristoyl glycine) is attached at Gly-2. 4 EF-hand domains span residues 24–59 (ESEI…FPFG), 60–95 (DPSK…TSRG), 96–131 (TVEE…IYRM), and 144–179 (TPEK…DPTI). Ca(2+)-binding residues include Asp-73, Asn-75, Asp-77, Glu-84, Asp-109, Asp-111, Asp-113, Tyr-115, Glu-120, Asp-157, Asn-159, Asp-161, Gln-163, and Glu-168.

It belongs to the recoverin family.

The protein resides in the perikaryon. It is found in the cell projection. Its subcellular location is the growth cone. Its function is as follows. Neuronal calcium sensor, regulator of G protein-coupled receptor phosphorylation in a calcium dependent manner. Regulates neurite extension and branching by activity-dependent Ca(2+) influx in growth cones. The protein is Neuronal calcium sensor 1 of Lymnaea stagnalis (Great pond snail).